We begin with the raw amino-acid sequence, 782 residues long: Coiled-coil alpha-helical rod protein 1 (782 aa).

2 stretches are compositionally biased toward basic and acidic residues: residues 62 to 74 (ERDV…EPGR) and 208 to 218 (ETRRAGEAKEL). Disordered stretches follow at residues 62 to 82 (ERDV…WGLE) and 185 to 218 (AHKE…AKEL). Coiled coils occupy residues 82 to 314 (EGSQ…ELTR), 344 to 398 (LMVQ…EVER), and 498 to 691 (VTDV…QQEG).

The protein localises to the cytoplasm. It is found in the nucleus. Functionally, may be a regulator of keratinocyte proliferation or differentiation. This is Coiled-coil alpha-helical rod protein 1 (CCHCR1) from Gorilla gorilla gorilla (Western lowland gorilla).